The following is a 92-amino-acid chain: DNA-directed RNA polymerase subunit Rpo5 (92 aa).

Belongs to the archaeal Rpo5/eukaryotic RPB5 RNA polymerase subunit family. Part of the RNA polymerase complex.

It is found in the cytoplasm. The enzyme catalyses RNA(n) + a ribonucleoside 5'-triphosphate = RNA(n+1) + diphosphate. In terms of biological role, DNA-dependent RNA polymerase (RNAP) catalyzes the transcription of DNA into RNA using the four ribonucleoside triphosphates as substrates. In Methanopyrus kandleri (strain AV19 / DSM 6324 / JCM 9639 / NBRC 100938), this protein is DNA-directed RNA polymerase subunit Rpo5.